The chain runs to 106 residues: Large ribosomal subunit protein P2A (106 aa).

K2 is covalently cross-linked (Glycyl lysine isopeptide (Lys-Gly) (interchain with G-Cter in ubiquitin)). Phosphothreonine is present on T16. Phosphoserine occurs at positions 40 and 43. K48 participates in a covalent cross-link: Glycyl lysine isopeptide (Lys-Gly) (interchain with G-Cter in ubiquitin). The residue at position 49 (S49) is a Phosphoserine. Residues 65–82 (PAAGPASAGGAAAASGDA) are compositionally biased toward low complexity. Residues 65-106 (PAAGPASAGGAAAASGDAAAEEEKEEEAAEESDDDMGFGLFD) are disordered. The span at 83-100 (AAEEEKEEEAAEESDDDM) shows a compositional bias: acidic residues. A Phosphoserine modification is found at S96.

Belongs to the eukaryotic ribosomal protein P1/P2 family. In terms of assembly, component of the large ribosomal subunit (LSU). Mature yeast ribosomes consist of a small (40S) and a large (60S) subunit. The 40S small subunit contains 1 molecule of ribosomal RNA (18S rRNA) and 33 different proteins (encoded by 57 genes). The large 60S subunit contains 3 rRNA molecules (25S, 5.8S and 5S rRNA) and 46 different proteins (encoded by 81 genes). The 5 acidic ribosomal P-proteins form the stalk structure of the 60S subunit. They are organized as a pentameric complex in which uL10/P0 interacts with 2 heterodimers, P1A-P2B and P1B-P2A. Post-translationally, phosphorylation is not involved in the interaction of the acidic P proteins with the ribosome, however it is suggested to affect the ribosome activity and to participate in a possible ribosome regulatory mechanism. The N-terminus is not modified.

It localises to the cytoplasm. Functionally, component of the ribosome, a large ribonucleoprotein complex responsible for the synthesis of proteins in the cell. The small ribosomal subunit (SSU) binds messenger RNAs (mRNAs) and translates the encoded message by selecting cognate aminoacyl-transfer RNA (tRNA) molecules. The large subunit (LSU) contains the ribosomal catalytic site termed the peptidyl transferase center (PTC), which catalyzes the formation of peptide bonds, thereby polymerizing the amino acids delivered by tRNAs into a polypeptide chain. The nascent polypeptides leave the ribosome through a tunnel in the LSU and interact with protein factors that function in enzymatic processing, targeting, and the membrane insertion of nascent chains at the exit of the ribosomal tunnel. This chain is Large ribosomal subunit protein P2A, found in Saccharomyces cerevisiae (strain ATCC 204508 / S288c) (Baker's yeast).